Consider the following 263-residue polypeptide: Aquaglyceroporin (263 aa).

Positions 1 to 22 are disordered; sequence MDQFVFSGGSEGGGELGGDRER. Helical transmembrane passes span 41-61, 64-84, 113-133, 157-177, 180-200, and 222-242; these read KYFC…FGLA, GGAQ…ITLF, LCYV…GYGI, VIPT…YGVM, LTVP…GATM, and VAAL…AFLG.

It belongs to the MIP/aquaporin (TC 1.A.8) family. Multimer.

It is found in the vacuole membrane. It carries out the reaction H2O(in) = H2O(out). It catalyses the reaction glycerol(in) = glycerol(out). The catalysed reaction is urea(in) = urea(out). Mediates water and glycerol transport across cell membranes. Permeable to selected sugar alcohols of up to five carbons and urea. Permeable to methylamine/methylammonium. In Toxoplasma gondii (strain ATCC 50611 / Me49), this protein is Aquaglyceroporin.